The primary structure comprises 268 residues: MIYSDAGIFLNETKASLVYSRLSKHIRNLGLSGFREYCELVASPAGAAARREMLSHLTTNFTRFFRENHHFEHLRDHVLPELLQRARSGGRVRIWSAASSDGQEPYSIALTVLSLMPNVADYDFKILATDIDPKILAIARAGAYDESALETVSPAMRKQWFSEVEVQGRRKFQVDDRVKRLITYNELNLMAQWPFKGKFDVIFCRNVVIYFDEPTQMKIWQRFAGLLPEGGHLYIGHSERVSGEAKHVFDNIGITTYRYTTKGLGRKA.

The 262-residue stretch at M1–K262 folds into the CheR-type methyltransferase domain. S-adenosyl-L-methionine-binding positions include N60, T62, R66, E104, D130, N188–L189, and R205–N206.

It carries out the reaction L-glutamyl-[protein] + S-adenosyl-L-methionine = [protein]-L-glutamate 5-O-methyl ester + S-adenosyl-L-homocysteine. Functionally, methylation of the membrane-bound methyl-accepting chemotaxis proteins (MCP) to form gamma-glutamyl methyl ester residues in MCP. In Rhizobium etli (strain ATCC 51251 / DSM 11541 / JCM 21823 / NBRC 15573 / CFN 42), this protein is Probable chemotaxis protein methyltransferase (cheRch1).